The sequence spans 61 residues: Small ribosomal subunit protein uS14 (61 aa).

Residues Cys-24, Cys-27, Cys-40, and Cys-43 each contribute to the Zn(2+) site.

This sequence belongs to the universal ribosomal protein uS14 family. Zinc-binding uS14 subfamily. Part of the 30S ribosomal subunit. Contacts proteins S3 and S10. The cofactor is Zn(2+).

Its function is as follows. Binds 16S rRNA, required for the assembly of 30S particles and may also be responsible for determining the conformation of the 16S rRNA at the A site. The sequence is that of Small ribosomal subunit protein uS14 from Streptococcus equi subsp. zooepidemicus (strain H70).